Reading from the N-terminus, the 413-residue chain is MQIKSFLLPIVAALLTSVSAADSSNKCSFSKTSITEATAITQLNACSTLDGEITVSGSGIGSIDLSSVKVLKAKLSILNSPSIVSLNFNQLQNITGALVINNATQLNSIDLTQLTNVETLQLVSLPSFAILNLNQGVQKAGTIVLSDTALTNLNGLASFNTIDSININNNKNISKIEFNDLQTVTDSLILSFNNDDAEVKLDSLKWAGNLTIQDVSSIQASNLTSVNGSLLISYNTFDELEFPNLKSVGNSMQIFAHDELTKISFPKLSELDGELEMFNNTQLEEIDFGNLTTIKGAVTISGPFDNLTMENLKLVSGDFQVNSTSDKFDCSAFDKLHEKGKIEGHNYVCTHPANPSSSSKSGSSTQTGKSDSKSSDGSSSSNSSSSSKKGASNVLVVPGMVLTTALGVLLALI.

A signal peptide spans 1 to 20; that stretch reads MQIKSFLLPIVAALLTSVSA. N93, N102, N172, N209, N222, N227, N279, N290, N306, N322, and N382 each carry an N-linked (GlcNAc...) asparagine glycan. Residues 347–390 form a disordered region; sequence YVCTHPANPSSSSKSGSSTQTGKSDSKSSDGSSSSNSSSSSKKG. Positions 356 to 390 are enriched in low complexity; it reads SSSSKSGSSTQTGKSDSKSSDGSSSSNSSSSSKKG. G390 is lipidated: GPI-anchor amidated glycine. A propeptide spans 391–413 (removed in mature form); it reads ASNVLVVPGMVLTTALGVLLALI.

It belongs to the SPS2 family.

Its subcellular location is the cell membrane. It localises to the secreted. It is found in the cell wall. Functionally, cell surface protein required for proper cell wall integrity and for the correct assembly of the mannoprotein outer layer of the cell wall. The polypeptide is Cell surface GPI-anchored protein ECM33 (ECM331) (Candida albicans (strain SC5314 / ATCC MYA-2876) (Yeast)).